The primary structure comprises 29 residues: Beta-theraphotoxin-Gr1b (29 aa).

3 disulfide bridges follow: Cys2-Cys16, Cys9-Cys21, and Cys15-Cys25. The residue at position 29 (Leu29) is a Leucine amide.

Belongs to the neurotoxin 30 (phrixotoxin) family. In terms of tissue distribution, expressed by the venom gland.

The protein resides in the secreted. Its function is as follows. Inhibits the voltage-gated sodium channels Nav1.1/SCN1A (IC(50)=360 nM), Nav1.2/SCN2A (IC(50)=600 nM), Nav1.3/SCN3A (IC(50)=1280), Nav1.4/SCN4A (IC(50)=330 nM), Nav1.6/SCN8A (IC(50)=1200 nM), Nav1.7/SCN9A (IC(50)=1-40 nM), and voltage-gated potassium channels Kv11.1/KCNH2 (IC(50)=4.8 uM). Induces analgesia in mammals. This analgesia is mediated by a non-opioid receptor related mechanism. This is Beta-theraphotoxin-Gr1b from Grammostola rosea (Chilean rose tarantula).